We begin with the raw amino-acid sequence, 784 residues long: Kinesin-like protein 6 (784 aa).

The Kinesin motor domain occupies 6–389 (SISVAVRVRP…LKYGNRAKNI (384 aa)). ATP is bound at residue 134–141 (GATGCGKT). Coiled coils occupy residues 405–440 (SEYVRTIYELRQKVSILQKRIAEESKQLALNKEVRK) and 463–483 (RDLQKSLIEHVRTLRRIEDEI). Residues 677–715 (SEVPTTSSVPPVEIKNKDSKPKVEKSLDKHNMNNDRSFL) are disordered. Basic and acidic residues predominate over residues 690–709 (IKNKDSKPKVEKSLDKHNMN).

Belongs to the TRAFAC class myosin-kinesin ATPase superfamily. Kinesin family. Kinesin II subfamily. In terms of assembly, heterodimer with klp5.

The protein resides in the cytoplasm. The protein localises to the cytoskeleton. It is found in the chromosome. Its subcellular location is the centromere. It localises to the kinetochore. The protein resides in the spindle. Functionally, has a role in establishing metaphase during mitosis. Required for chromosome segregation where it generates tension during kinetochore capturing. This Schizosaccharomyces pombe (strain 972 / ATCC 24843) (Fission yeast) protein is Kinesin-like protein 6 (klp6).